The chain runs to 909 residues: uncharacterized protein (909 aa).

This is an uncharacterized protein from Sinorhizobium fredii (strain NBRC 101917 / NGR234).